Reading from the N-terminus, the 320-residue chain is Lactamase-like protein GME11357 (320 aa).

Histidine 106, histidine 108, aspartate 110, and histidine 111 together coordinate Zn(2+). Residue aspartate 110 is the Proton donor/acceptor of the active site.

Belongs to the metallo-beta-lactamase superfamily. Zn(2+) serves as cofactor.

Its pathway is secondary metabolite biosynthesis. Functionally, lactamase-like protein; part of the gene cluster that mediates the biosynthesis of dibenzodioxocinones such as pestalotiollide B, a novel class of inhibitors against cholesterol ester transfer protein (CEPT). The biosynthesis initiates from condensation of acetate and malonate units catalyzed by the non-reducing PKS pks8/GME11356. Pks8/GME11356 lacks a thioesterase (TE) domain, which is important to the cyclizing of the third ring of atrochrysone carboxylic acid, and the esterase GME11355 might play the role of TE and catalyzes the cyclization reaction of the C ring. The lactamase-like protein GME11357 (or other beta-lactamases in Pestalotiopsis microspora) probably hydrolyzes the thioester bond between the ACP of pks8/GME11356 and the intermediate to release atrochrysone carboxylic acid, which is spontaneously dehydrates to form endocrocin anthrone. Endocrocin anthrone is further converted to emodin via the endocrocin intermediate. Emodin is then oxidized by several enzymes such as the Baeyer-Villiger oxidase GME11358, the oxidoreductase GME11367, the short chain dehydrogenase/reductase GME11373, as well as by other oxidoreductases from the cluster, to modify the A and C rings and open the B ring, and finally yield monodictyphenone. The prenyltransferase GME11375 may catalyze the addition reaction between the C5 side chains and the carbon bone of dibenzodioxocinones. The remaining biochemical reactions to the final product dibenzodioxocinones should be methylation catalyzed by methyltransferase GME11366 and reduction and lactonization reaction catalyzed by a series of oxidordeuctases. The protein is Lactamase-like protein GME11357 of Pestalotiopsis microspora.